The chain runs to 824 residues: Dapper 1-B (824 aa).

Disordered stretches follow at residues 1-33, 131-150, and 515-534; these read MKPIPAAPEPLGQHQDSPRRKDKGEAESERQRT, EEHLETDSRPSSGFYELSDG, and HASSSFDERPPLDFKSEGSS. Positions 2–343 are interaction with tcf7l1-A; it reads KPIPAAPEPL…PVRTNKPRTS (342 aa). Over residues 16 to 33 the composition is skewed to basic and acidic residues; it reads DSPRRKDKGEAESERQRT. A coiled-coil region spans residues 84 to 139; the sequence is EEKFLEDNILLLKKQLNCLRKRDAGLLSQLHELDKQINDLRIDVEKTEEHLETDSR. The segment covering 520–530 has biased composition (basic and acidic residues); that stretch reads FDERPPLDFKS. The PDZ-binding motif lies at 821–824; sequence MTTV.

It belongs to the dapper family. As to quaternary structure, interacts with dbf4 and tcf7l1-A. Interacts with dvl2/dsh; the interaction is required for dact1-b phosphorylation by CaMK1D and seems to become disrupted by the phosphorylation. Phosphorylated by CaMK1D; the phosphorylation requires binding to dvl2/dsh. As to expression, expressed both in the dorsal lip in early gastrula and throughout the posterior presumptive ectoderm in early neurula. Expressed in the dorsal neural folds at the tailbud stage and highly expressed in the tadpole head, including the brain, retina and cartilaginous branchial arch derivatives.

Its subcellular location is the cytoplasm. It localises to the nucleus. In terms of biological role, involved in regulation of intracellular signaling pathways during development. Specifically thought to play a role in canonical and/or non-canonical Wnt signaling pathways through interaction with DSH (Dishevelled) family proteins. Binds to dvl2 to regulate the degradation of beta-catenin (ctnnb1-A and possibly ctnnb1-B), thereby modulating the transcriptional activation of target genes of the Wnt signaling pathway. Seems to promote beta-catenin degradation if not phosphorylated and to block beta-catenin degradation if phosphorylated by CaMK1D. Involved in regulation of catenin delta/ctnnd1 protein level. May also bind to and directly stimulate the activity of tcf7l1-A. Also regulates the activation by dvl2 of jnk, a component of ctnnb1/beta-catenin-independent frizzled signaling. Required for notochord and head formation. This Xenopus laevis (African clawed frog) protein is Dapper 1-B (dact1-b).